Reading from the N-terminus, the 456-residue chain is Exodeoxyribonuclease 7 large subunit (456 aa).

This sequence belongs to the XseA family. In terms of assembly, heterooligomer composed of large and small subunits.

The protein resides in the cytoplasm. The catalysed reaction is Exonucleolytic cleavage in either 5'- to 3'- or 3'- to 5'-direction to yield nucleoside 5'-phosphates.. Functionally, bidirectionally degrades single-stranded DNA into large acid-insoluble oligonucleotides, which are then degraded further into small acid-soluble oligonucleotides. In Escherichia coli (strain ATCC 8739 / DSM 1576 / NBRC 3972 / NCIMB 8545 / WDCM 00012 / Crooks), this protein is Exodeoxyribonuclease 7 large subunit.